Consider the following 505-residue polypeptide: Lysine--tRNA ligase (505 aa).

2 residues coordinate Mg(2+): Glu-415 and Glu-422.

This sequence belongs to the class-II aminoacyl-tRNA synthetase family. In terms of assembly, homodimer. It depends on Mg(2+) as a cofactor.

It is found in the cytoplasm. It carries out the reaction tRNA(Lys) + L-lysine + ATP = L-lysyl-tRNA(Lys) + AMP + diphosphate. In Yersinia enterocolitica serotype O:8 / biotype 1B (strain NCTC 13174 / 8081), this protein is Lysine--tRNA ligase.